The sequence spans 97 residues: ESAT-6-like protein EsxG (97 aa).

Belongs to the WXG100 family. CFP-10 subfamily. Forms a tight 1:1 complex with EsxH.

Its subcellular location is the secreted. This chain is ESAT-6-like protein EsxG, found in Mycolicibacterium smegmatis (strain ATCC 700084 / mc(2)155) (Mycobacterium smegmatis).